A 278-amino-acid chain; its full sequence is Pantothenate synthetase (278 aa).

26-33 (MGNLHEGH) contacts ATP. The Proton donor role is filled by His33. Residue Gln57 participates in (R)-pantoate binding. Gln57 lines the beta-alanine pocket. 144–147 (GKKD) is a binding site for ATP. Gln150 provides a ligand contact to (R)-pantoate. ATP contacts are provided by residues Gly173 and 181-184 (LSSR).

This sequence belongs to the pantothenate synthetase family. As to quaternary structure, homodimer.

Its subcellular location is the cytoplasm. The enzyme catalyses (R)-pantoate + beta-alanine + ATP = (R)-pantothenate + AMP + diphosphate + H(+). It functions in the pathway cofactor biosynthesis; (R)-pantothenate biosynthesis; (R)-pantothenate from (R)-pantoate and beta-alanine: step 1/1. In terms of biological role, catalyzes the condensation of pantoate with beta-alanine in an ATP-dependent reaction via a pantoyl-adenylate intermediate. This is Pantothenate synthetase from Neisseria meningitidis serogroup B (strain ATCC BAA-335 / MC58).